Reading from the N-terminus, the 204-residue chain is Large ribosomal subunit protein bL25 (204 aa).

It belongs to the bacterial ribosomal protein bL25 family. CTC subfamily. Part of the 50S ribosomal subunit; part of the 5S rRNA/L5/L18/L25 subcomplex. Contacts the 5S rRNA. Binds to the 5S rRNA independently of L5 and L18.

Its function is as follows. This is one of the proteins that binds to the 5S RNA in the ribosome where it forms part of the central protuberance. The chain is Large ribosomal subunit protein bL25 from Burkholderia pseudomallei (strain 668).